The primary structure comprises 325 residues: tRNA(Ile)-lysidine synthase (325 aa).

34–39 serves as a coordination point for ATP; the sequence is SGGADS.

It belongs to the tRNA(Ile)-lysidine synthase family.

It localises to the cytoplasm. The enzyme catalyses cytidine(34) in tRNA(Ile2) + L-lysine + ATP = lysidine(34) in tRNA(Ile2) + AMP + diphosphate + H(+). Functionally, ligates lysine onto the cytidine present at position 34 of the AUA codon-specific tRNA(Ile) that contains the anticodon CAU, in an ATP-dependent manner. Cytidine is converted to lysidine, thus changing the amino acid specificity of the tRNA from methionine to isoleucine. This Rhodococcus jostii (strain RHA1) protein is tRNA(Ile)-lysidine synthase.